Consider the following 467-residue polypeptide: Congo red hypersensitive protein 2 (467 aa).

The N-terminal stretch at 1–23 is a signal peptide; it reads MAIVNSWLICLVSIFSFVVRVEA. A glycan (N-linked (GlcNAc...) asparagine) is linked at Asn-28. A disulfide bridge links Cys-56 with Cys-67. A GH16 domain is found at 63–280; sequence SHDSCMPVPI…WSGGEINWDA (218 aa). The N-linked (GlcNAc...) asparagine glycan is linked to Asn-96. The active-site Nucleophile is the Glu-166. Glu-170 functions as the Proton donor in the catalytic mechanism. Glu-170 is a binding site for chitin. Asn-190, Asn-196, Asn-233, and Asn-237 each carry an N-linked (GlcNAc...) asparagine glycan. Residue Trp-257 coordinates chitin. Residue Asn-261 is glycosylated (N-linked (GlcNAc...) asparagine). Residue Thr-268 coordinates chitin. 2 N-linked (GlcNAc...) asparagine glycosylation sites follow: Asn-297 and Asn-310. Positions 337 to 444 are disordered; that stretch reads MDSDEGSGLD…SSSTSSMSGN (108 aa). The span at 351-444 shows a compositional bias: low complexity; the sequence is ATTSSTQKSS…SSSTSSMSGN (94 aa). Residue Asn-445 is the site of GPI-anchor amidated asparagine attachment. Positions 446–467 are cleaved as a propeptide — removed in mature form; the sequence is AGANVAANWRLTVLCVILGYVL.

It belongs to the glycosyl hydrolase 16 family. CRH1 subfamily. The GPI-anchor is attached to the protein in the endoplasmic reticulum and serves to target the protein to the cell surface. There, the glucosamine-inositol phospholipid moiety is cleaved off and the GPI-modified mannoprotein is covalently attached via its lipidless GPI glycan remnant to the 1,6-beta-glucan of the outer cell wall layer.

It is found in the secreted. Its subcellular location is the cell wall. The protein resides in the membrane. The catalysed reaction is Random endo-hydrolysis of N-acetyl-beta-D-glucosaminide (1-&gt;4)-beta-linkages in chitin and chitodextrins.. Dual chitinase/transglycosylase that plays a role in cell wall architecture. Chitinase and transglycosylase activities are coupled. Required for the polysaccharide cross-linking at the septa and the cell wall. More specifically, transfers chitin to both beta(1-3)- and beta(1-6)glucan in the cell wall. The minimal number of intact hexopyranose units required in the molecule of the acceptor oligosaccharide is two and the effectivity of the acceptor increased with the increasing length of its oligosaccharide chain. The protein is Congo red hypersensitive protein 2 of Saccharomyces cerevisiae (strain ATCC 204508 / S288c) (Baker's yeast).